The chain runs to 480 residues: Ribosomal protein uS12 methylthiotransferase RimO (480 aa).

The MTTase N-terminal domain occupies 14-135 (LSVAMVTLGC…IAARLRSIVA (122 aa)). Residues Cys-23, Cys-59, Cys-98, Cys-193, Cys-197, and Cys-200 each coordinate [4Fe-4S] cluster. A Radical SAM core domain is found at 179-410 (LDDGPTAALK…DLVEELTSQR (232 aa)). Residues 412-480 (AERLGEQVEV…EGADLDARPL (69 aa)) enclose the TRAM domain.

This sequence belongs to the methylthiotransferase family. RimO subfamily. The cofactor is [4Fe-4S] cluster.

Its subcellular location is the cytoplasm. It carries out the reaction L-aspartate(89)-[ribosomal protein uS12]-hydrogen + (sulfur carrier)-SH + AH2 + 2 S-adenosyl-L-methionine = 3-methylsulfanyl-L-aspartate(89)-[ribosomal protein uS12]-hydrogen + (sulfur carrier)-H + 5'-deoxyadenosine + L-methionine + A + S-adenosyl-L-homocysteine + 2 H(+). In terms of biological role, catalyzes the methylthiolation of an aspartic acid residue of ribosomal protein uS12. This is Ribosomal protein uS12 methylthiotransferase RimO from Nocardioides sp. (strain ATCC BAA-499 / JS614).